Here is a 375-residue protein sequence, read N- to C-terminus: Succinyl-diaminopimelate desuccinylase (375 aa).

Residue His-66 coordinates Zn(2+). Asp-68 is an active-site residue. Asp-99 contacts Zn(2+). The active-site Proton acceptor is Glu-133. Zn(2+) contacts are provided by Glu-134, Glu-162, and His-348.

Belongs to the peptidase M20A family. DapE subfamily. As to quaternary structure, homodimer. Requires Zn(2+) as cofactor. Co(2+) is required as a cofactor.

The enzyme catalyses N-succinyl-(2S,6S)-2,6-diaminopimelate + H2O = (2S,6S)-2,6-diaminopimelate + succinate. It participates in amino-acid biosynthesis; L-lysine biosynthesis via DAP pathway; LL-2,6-diaminopimelate from (S)-tetrahydrodipicolinate (succinylase route): step 3/3. In terms of biological role, catalyzes the hydrolysis of N-succinyl-L,L-diaminopimelic acid (SDAP), forming succinate and LL-2,6-diaminopimelate (DAP), an intermediate involved in the bacterial biosynthesis of lysine and meso-diaminopimelic acid, an essential component of bacterial cell walls. The sequence is that of Succinyl-diaminopimelate desuccinylase from Escherichia coli (strain SE11).